The primary structure comprises 347 residues: Quinolinate synthase (347 aa).

Iminosuccinate contacts are provided by H47 and S68. Residue C113 coordinates [4Fe-4S] cluster. Residues 139 to 141 (YAN) and S156 contribute to the iminosuccinate site. C200 is a [4Fe-4S] cluster binding site. Residues 226 to 228 (HPE) and T243 contribute to the iminosuccinate site. C297 contributes to the [4Fe-4S] cluster binding site.

Belongs to the quinolinate synthase family. Type 1 subfamily. It depends on [4Fe-4S] cluster as a cofactor.

It is found in the cytoplasm. The catalysed reaction is iminosuccinate + dihydroxyacetone phosphate = quinolinate + phosphate + 2 H2O + H(+). It functions in the pathway cofactor biosynthesis; NAD(+) biosynthesis; quinolinate from iminoaspartate: step 1/1. Catalyzes the condensation of iminoaspartate with dihydroxyacetone phosphate to form quinolinate. The chain is Quinolinate synthase from Shigella dysenteriae serotype 1 (strain Sd197).